Consider the following 216-residue polypeptide: Large ribosomal subunit protein bL25 (216 aa).

Disordered stretches follow at residues 1–21 and 192–216; these read MAETQTLKAEAREKGSKGAVR and SADNEAKTEEAGEDKSEEKSSGKED. The span at 195-216 shows a compositional bias: basic and acidic residues; sequence NEAKTEEAGEDKSEEKSSGKED.

Belongs to the bacterial ribosomal protein bL25 family. CTC subfamily. In terms of assembly, part of the 50S ribosomal subunit; part of the 5S rRNA/L5/L18/L25 subcomplex. Contacts the 5S rRNA. Binds to the 5S rRNA independently of L5 and L18.

This is one of the proteins that binds to the 5S RNA in the ribosome where it forms part of the central protuberance. The protein is Large ribosomal subunit protein bL25 of Parvibaculum lavamentivorans (strain DS-1 / DSM 13023 / NCIMB 13966).